We begin with the raw amino-acid sequence, 151 residues long: MATLEQNLQEMLQDAVEDLGCELWGIECQRVGRFMTVRLFIDKDGGVTVDDCADVSRQVSAILDVEDPIADKYNLEVSSPGLDRPLFTLPQFERYIGQDIAVHLRIPVMERRKWQGKLERIEKDMITLIVDDQEQILVFGNIQKANVVAKF.

The protein belongs to the RimP family.

It is found in the cytoplasm. Functionally, required for maturation of 30S ribosomal subunits. The polypeptide is Ribosome maturation factor RimP (Haemophilus influenzae (strain PittGG)).